A 411-amino-acid polypeptide reads, in one-letter code: Corticotropin-releasing factor receptor 2 (411 aa).

A signal peptide (not cleaved) is located at residues 1 to 19 (MDAALLHSLLEANCSLALA). The Extracellular segment spans residues 1–108 (MDAALLHSLL…EPILDDKQRK (108 aa)). N-linked (GlcNAc...) asparagine glycans are attached at residues asparagine 13, asparagine 41, asparagine 74, asparagine 86, and asparagine 94. Cystine bridges form between cysteine 14-cysteine 50, cysteine 40-cysteine 83, tryptophan 51-arginine 77, and cysteine 64-cysteine 98. A helical transmembrane segment spans residues 109-139 (YDLHYRIALVVNYLGHCVSVAALVAAFLLFL). Residues 140 to 146 (ALRSIRC) are Cytoplasmic-facing. Residues 147 to 171 (LRNVIHWNLITTFILRNVMWFLLQL) traverse the membrane as a helical segment. Residues 172–185 (VDHEVHESNEVWCR) lie on the Extracellular side of the membrane. A disulfide bridge connects residues cysteine 184 and cysteine 254. The chain crosses the membrane as a helical span at residues 186–214 (CITTIFNYFVVTNFFWMFVEGCYLHTAIV). Residues 215-221 (MTYSTER) lie on the Cytoplasmic side of the membrane. Residues 222-249 (LRKCLFLFIGWCIPFPIIVAWAIGKLYY) form a helical membrane-spanning segment. At 250–265 (ENEQCWFGKEPGDLVD) the chain is on the extracellular side. A helical transmembrane segment spans residues 266–291 (YIYQGPIILVLLINFVFLFNIVRILM). The Cytoplasmic segment spans residues 292-302 (TKLRASTTSET). The helical transmembrane segment at 303–327 (IQYRKAVKATLVLLPLLGITYMLFF) threads the bilayer. Residues 328 to 334 (VNPGEDD) lie on the Extracellular side of the membrane. Residues 335 to 364 (LSQIMFIYFNSFLQSFQGFFVSVFYCFFNG) form a helical membrane-spanning segment. Over 365 to 411 (EVRSAVRKRWHRWQDHHSLRVPMARAMSIPTSPTRISFHSIKQTAAV) the chain is Cytoplasmic.

The protein belongs to the G-protein coupled receptor 2 family. In terms of assembly, monomer. Interacts (via N-terminal extracellular domain) with CRF, UCN, UCN2 and UCN3. Has highest affinity for UCN, and considerably lower affinity for CRF, UNC2 and UCN3. An N-glycosylation site within the signal peptide impedes its proper cleavage and function.

It is found in the cell membrane. Its function is as follows. G-protein coupled receptor for CRH (corticotropin-releasing factor), UCN (urocortin), UCN2 and UCN3. Has high affinity for UCN. Ligand binding causes a conformation change that triggers signaling via guanine nucleotide-binding proteins (G proteins) and down-stream effectors, such as adenylate cyclase. Promotes the activation of adenylate cyclase, leading to increased intracellular cAMP levels. This is Corticotropin-releasing factor receptor 2 (CRHR2) from Homo sapiens (Human).